We begin with the raw amino-acid sequence, 485 residues long: Aspartyl/glutamyl-tRNA(Asn/Gln) amidotransferase subunit B (485 aa).

The protein belongs to the GatB/GatE family. GatB subfamily. In terms of assembly, heterotrimer of A, B and C subunits.

It catalyses the reaction L-glutamyl-tRNA(Gln) + L-glutamine + ATP + H2O = L-glutaminyl-tRNA(Gln) + L-glutamate + ADP + phosphate + H(+). The catalysed reaction is L-aspartyl-tRNA(Asn) + L-glutamine + ATP + H2O = L-asparaginyl-tRNA(Asn) + L-glutamate + ADP + phosphate + 2 H(+). In terms of biological role, allows the formation of correctly charged Asn-tRNA(Asn) or Gln-tRNA(Gln) through the transamidation of misacylated Asp-tRNA(Asn) or Glu-tRNA(Gln) in organisms which lack either or both of asparaginyl-tRNA or glutaminyl-tRNA synthetases. The reaction takes place in the presence of glutamine and ATP through an activated phospho-Asp-tRNA(Asn) or phospho-Glu-tRNA(Gln). This is Aspartyl/glutamyl-tRNA(Asn/Gln) amidotransferase subunit B from Borrelia garinii subsp. bavariensis (strain ATCC BAA-2496 / DSM 23469 / PBi) (Borreliella bavariensis).